The chain runs to 34 residues: Omega/M-ectatotoxin-Et1a subunit B (34 aa).

A disulfide bond links C10 and C32.

It belongs to the ectatomin family. Ectatomin-Et subfamily. In terms of assembly, heterodimer of an A and a B chain; disulfide-linked. In terms of tissue distribution, expressed by the venom gland.

It is found in the secreted. Its subcellular location is the target cell membrane. Its function is as follows. Algogenic for animals, human and insects. At high concentrations (0.5-1 uM), it acts as a pore-forming protein that forms nonselective cation channels both in cell and artificial membranes. It is weakly selective for cation over anions channel conductance is identical in both directions. At lower concentrations (1-10 nM), this heterodimer inhibits cardiac L-type calcium currents in isolated rat cardiac ventricular myocytes. The protein is Omega/M-ectatotoxin-Et1a subunit B of Ectatomma tuberculatum (Selva ant).